The primary structure comprises 398 residues: MSQKLVLILNCGSSSLKFAILDPVSGAEKLSGLAEAFYLPDARIKWKLNGEKGNADLGAGAAHSEALNFIVSTILTEDLKNSIAAIGHRVVHGGEKYTKSVVITDEVIQGIKDAAEFAPLHNPAHLIGIEEAFKAFPHLKDNNVAIFDTAFHQTMPEEAFLYALPYSLYKEHGVRRYGMHGTSHYFVSREAAKRLNIAEDKINVITCHLGNGASVAAIRQGKCIDTSMGFTPLEGLVMGTRSGDLDPAIIFYMHNTLGMSVAQIEETLVKKSGLLGLTEVTSDCRYSEDNYEKESAAKRALDVFCYRLAKYIGSYMAIIGENLDAIVFTGGIGENAALVRQITLNHLKLFGYKIDDEKNSAARFGNEGVITADNTPIAIVIPTNEELVIAQDTARLSF.

N10 lines the Mg(2+) pocket. K17 provides a ligand contact to ATP. R89 is a substrate binding site. Catalysis depends on D148, which acts as the Proton donor/acceptor. Residues 208–212 (HLGNG), 283–285 (DCR), and 331–335 (GIGEN) each bind ATP. E385 contacts Mg(2+).

This sequence belongs to the acetokinase family. Homodimer. Mg(2+) serves as cofactor. It depends on Mn(2+) as a cofactor.

It localises to the cytoplasm. It catalyses the reaction acetate + ATP = acetyl phosphate + ADP. It functions in the pathway metabolic intermediate biosynthesis; acetyl-CoA biosynthesis; acetyl-CoA from acetate: step 1/2. In terms of biological role, catalyzes the formation of acetyl phosphate from acetate and ATP. Can also catalyze the reverse reaction. This Histophilus somni (strain 129Pt) (Haemophilus somnus) protein is Acetate kinase.